Consider the following 324-residue polypeptide: Acetyl-coenzyme A carboxylase carboxyl transferase subunit alpha (324 aa).

The 255-residue stretch at 44–298 (RFQDKLTKLQ…RKELIKQLNI (255 aa)) folds into the CoA carboxyltransferase C-terminal domain.

This sequence belongs to the AccA family. Acetyl-CoA carboxylase is a heterohexamer composed of biotin carboxyl carrier protein (accB), biotin carboxylase (accC) and two subunits each of ACCase subunit alpha (accA) and ACCase subunit beta (accD).

The protein localises to the plastid. The protein resides in the chloroplast. The catalysed reaction is N(6)-carboxybiotinyl-L-lysyl-[protein] + acetyl-CoA = N(6)-biotinyl-L-lysyl-[protein] + malonyl-CoA. The protein operates within lipid metabolism; malonyl-CoA biosynthesis; malonyl-CoA from acetyl-CoA: step 1/1. Functionally, component of the acetyl coenzyme A carboxylase (ACC) complex. First, biotin carboxylase catalyzes the carboxylation of biotin on its carrier protein (BCCP) and then the CO(2) group is transferred by the carboxyltransferase to acetyl-CoA to form malonyl-CoA. The protein is Acetyl-coenzyme A carboxylase carboxyl transferase subunit alpha of Porphyra purpurea (Red seaweed).